The following is a 115-amino-acid chain: Iron-sulfur cluster insertion protein ErpA (115 aa).

3 residues coordinate iron-sulfur cluster: cysteine 43, cysteine 107, and cysteine 109.

It belongs to the HesB/IscA family. As to quaternary structure, homodimer. It depends on iron-sulfur cluster as a cofactor.

Its function is as follows. Required for insertion of 4Fe-4S clusters for at least IspG. The chain is Iron-sulfur cluster insertion protein ErpA from Photorhabdus laumondii subsp. laumondii (strain DSM 15139 / CIP 105565 / TT01) (Photorhabdus luminescens subsp. laumondii).